The primary structure comprises 2359 residues: Low-reducing polyketide synthase drtA (2359 aa).

The Ketosynthase family 3 (KS3) domain maps to leucine 17–glutamate 444. Catalysis depends on for beta-ketoacyl synthase activity residues cysteine 190, histidine 327, and histidine 367. Positions valine 556–lysine 868 are malonyl-CoA:ACP transacylase (MAT) domain. Serine 648 functions as the For malonyltransferase activity in the catalytic mechanism. The interval histidine 940–alanine 1077 is N-terminal hotdog fold. Residues histidine 940–asparagine 1245 are dehydratase (DH) domain. One can recognise a PKS/mFAS DH domain in the interval histidine 940–valine 1250. Histidine 972 acts as the Proton acceptor; for dehydratase activity in catalysis. A C-terminal hotdog fold region spans residues alanine 1089 to valine 1250. Aspartate 1153 (proton donor; for dehydratase activity) is an active-site residue. The segment at glycine 1659 to valine 1970 is enoyl reductase (ER) domain. The tract at residues serine 1995–aspartate 2172 is ketoreductase (KR) domain. A Carrier domain is found at alanine 2280–leucine 2356. Serine 2316 carries the O-(pantetheine 4'-phosphoryl)serine modification.

It participates in secondary metabolite biosynthesis; terpenoid biosynthesis. Functionally, low-reducing polyketide synthase; part of the gene cluster that mediates the biosynthesis of various drimane-type sesquiterpene esters, compounds that exhibit diverse biological activities and are widely present in eukaryotes. The pathway begins with the synthesis of the backbone drimenol by the terpene cyclase drtB using farnesyl pyrophosphate (FPP) as substrate. The cytochrome P450 monooxygenase drtD is then responsible for the hydroxylations at C-6, C-9 and C-12, as well as the oxidation of hydroxyl groups at C-6 and C-11 to a ketone and an aldehyde, respectively. Then, the biosynthesis can go in two directions, either the hydroxylated drimenol is further hydroxylated at C-2 and C-3 by an enzyme(s) not associated with the drt cluster, or the FAD-binding oxidoreductase drtC further oxidizes C-11 or C-12 to form the butyrolactone ring. DrtB, drtD and drtC are solely responsible for the formation of the different drimane structures observed during drimane sesquiterpenes biosynthesis. The polyketide synthase drtA synthesizes different lengths (C6 and C8) of PKS chains, which are then oxidized to varying degrees by the short-chain dehydrogenase drtF. Finally, these PKS chains are transferred onto drimane sesquiterpenes by the acyltransferase drtE, forming the sesquiterpene esters. In addition to the different fatty acyl-CoA chains produced by drtA, drtE is also able to use cinnamoyl-CoA as a substrate. The polypeptide is Low-reducing polyketide synthase drtA (Aspergillus calidoustus).